Consider the following 225-residue polypeptide: MAGARLFRFRDEPGPGADPTVLEVRVPQVLHVQYGMYVWPCAVVLAQYLWFHRRVLPGKAVLEIGAGVSLPGILAAKCGAKVTLSDSPELPHCLDICWQSCQMNNLPQVQIVGLTWGHISKDTLSLPPQDIILGSDVFFEPEDFESILATVYFLMQKNPKVQFWSTYQVRSADWSLEGLLYKWDMRCVHIPLESFDADKEDIAESTLPGRHTIEMLIISFAKDSS.

Belongs to the methyltransferase superfamily. METTL23 family. Interacts with HSPA5, HSP90B1, TUBULIN, UGGT1 and UGGT2. Interacts with TET3. Interacts with STPG4.

The protein localises to the nucleus. It is found in the cytoplasm. The catalysed reaction is L-arginyl-[protein] + 2 S-adenosyl-L-methionine = N(omega),N(omega)-dimethyl-L-arginyl-[protein] + 2 S-adenosyl-L-homocysteine + 2 H(+). Functionally, histone methyltransferase that dimethylates histone H3 at 'Arg-17', forming asymmetric dimethylarginine (H3R17me2a), leading to activate transcription via chromatin remodeling. Maternal factor involved in epigenetic chromatin reprogramming of the paternal genome in the zygote: mediates H3R17me2a, promoting histone H3.3 incorporation in the male pronucleus, leading to TET3 recruitment and subsequent DNA demethylation. This chain is Histone-arginine methyltransferase METTL23, found in Rattus norvegicus (Rat).